Consider the following 114-residue polypeptide: Iron-sulfur cluster insertion protein ErpA (114 aa).

Residues Cys42, Cys106, and Cys108 each contribute to the iron-sulfur cluster site.

Belongs to the HesB/IscA family. As to quaternary structure, homodimer. Iron-sulfur cluster is required as a cofactor.

Required for insertion of 4Fe-4S clusters for at least IspG. In Wigglesworthia glossinidia brevipalpis, this protein is Iron-sulfur cluster insertion protein ErpA.